A 630-amino-acid chain; its full sequence is Biosynthetic arginine decarboxylase (630 aa).

N6-(pyridoxal phosphate)lysine is present on Lys99. Position 281 to 291 (281 to 291 (VDIGGGLGVDY)) interacts with substrate.

Belongs to the Orn/Lys/Arg decarboxylase class-II family. SpeA subfamily. Mg(2+) serves as cofactor. It depends on pyridoxal 5'-phosphate as a cofactor.

It carries out the reaction L-arginine + H(+) = agmatine + CO2. It participates in amine and polyamine biosynthesis; agmatine biosynthesis; agmatine from L-arginine: step 1/1. In terms of biological role, catalyzes the biosynthesis of agmatine from arginine. This is Biosynthetic arginine decarboxylase from Bacteroides fragilis (strain ATCC 25285 / DSM 2151 / CCUG 4856 / JCM 11019 / LMG 10263 / NCTC 9343 / Onslow / VPI 2553 / EN-2).